Here is a 194-residue protein sequence, read N- to C-terminus: MSQIKLIVGLANPGTKYEDTRHNAGEWLINEIARQFNVSLKEEAKFFGKVAKINAAGGEVRLLVPTTFMNLSGKAVGALANFYRIKPEEILVAHDELDLPPGVAKIKQGGGHGGHNGLKDIIASLGNSNNFYRVRIGIGHPGSKELVAGYVLGKPSPQDQEKINAAVDEAGRCVDLLLKDGITKATNRLNAFKA.

Tyrosine 17 is a binding site for tRNA. Histidine 22 (proton acceptor) is an active-site residue. TRNA is bound by residues phenylalanine 68, asparagine 70, and asparagine 116.

The protein belongs to the PTH family. Monomer.

It localises to the cytoplasm. The catalysed reaction is an N-acyl-L-alpha-aminoacyl-tRNA + H2O = an N-acyl-L-amino acid + a tRNA + H(+). Functionally, hydrolyzes ribosome-free peptidyl-tRNAs (with 1 or more amino acids incorporated), which drop off the ribosome during protein synthesis, or as a result of ribosome stalling. In terms of biological role, catalyzes the release of premature peptidyl moieties from peptidyl-tRNA molecules trapped in stalled 50S ribosomal subunits, and thus maintains levels of free tRNAs and 50S ribosomes. The sequence is that of Peptidyl-tRNA hydrolase from Actinobacillus pleuropneumoniae serotype 5b (strain L20).